The following is a 326-amino-acid chain: L-lactate dehydrogenase (326 aa).

NAD(+)-binding positions include V26, D47, K52, Y78, and 92–93 (GA). Substrate-binding residues include Q95 and R101. NAD(+) contacts are provided by residues T114, 131 to 133 (ASN), and S156. A substrate-binding site is contributed by 133 to 136 (NPVD). Residue 161 to 164 (DTAR) participates in substrate binding. Residues R166 and H181 each coordinate beta-D-fructose 1,6-bisphosphate. The active-site Proton acceptor is H188. A Phosphotyrosine modification is found at Y233. T242 is a binding site for substrate.

Belongs to the LDH/MDH superfamily. LDH family. Homotetramer.

The protein localises to the cytoplasm. It catalyses the reaction (S)-lactate + NAD(+) = pyruvate + NADH + H(+). It participates in fermentation; pyruvate fermentation to lactate; (S)-lactate from pyruvate: step 1/1. With respect to regulation, allosterically activated by fructose 1,6-bisphosphate (FBP). Functionally, catalyzes the conversion of lactate to pyruvate. This is L-lactate dehydrogenase from Corynebacterium jeikeium (strain K411).